A 365-amino-acid chain; its full sequence is Chorismate synthase (365 aa).

R47 serves as a coordination point for NADP(+). FMN is bound by residues 124–126 (RAS), G287, 302–306 (KPTAT), and R328.

Belongs to the chorismate synthase family. As to quaternary structure, homotetramer. FMNH2 serves as cofactor.

It catalyses the reaction 5-O-(1-carboxyvinyl)-3-phosphoshikimate = chorismate + phosphate. It functions in the pathway metabolic intermediate biosynthesis; chorismate biosynthesis; chorismate from D-erythrose 4-phosphate and phosphoenolpyruvate: step 7/7. Catalyzes the anti-1,4-elimination of the C-3 phosphate and the C-6 proR hydrogen from 5-enolpyruvylshikimate-3-phosphate (EPSP) to yield chorismate, which is the branch point compound that serves as the starting substrate for the three terminal pathways of aromatic amino acid biosynthesis. This reaction introduces a second double bond into the aromatic ring system. In Prochlorococcus marinus (strain AS9601), this protein is Chorismate synthase.